Here is a 106-residue protein sequence, read N- to C-terminus: Ribonuclease P protein component 4 (106 aa).

C62, C65, C88, and C91 together coordinate Zn(2+).

Belongs to the eukaryotic/archaeal RNase P protein component 4 family. As to quaternary structure, consists of a catalytic RNA component and at least 4-5 protein subunits. The cofactor is Zn(2+).

The protein resides in the cytoplasm. The catalysed reaction is Endonucleolytic cleavage of RNA, removing 5'-extranucleotides from tRNA precursor.. Functionally, part of ribonuclease P, a protein complex that generates mature tRNA molecules by cleaving their 5'-ends. The polypeptide is Ribonuclease P protein component 4 (Methanocorpusculum labreanum (strain ATCC 43576 / DSM 4855 / Z)).